An 883-amino-acid chain; its full sequence is DNA mismatch repair protein MutS (883 aa).

633 to 640 (GPNMGGKS) lines the ATP pocket.

It belongs to the DNA mismatch repair MutS family.

Functionally, this protein is involved in the repair of mismatches in DNA. It is possible that it carries out the mismatch recognition step. This protein has a weak ATPase activity. In Bordetella parapertussis (strain 12822 / ATCC BAA-587 / NCTC 13253), this protein is DNA mismatch repair protein MutS.